Consider the following 357-residue polypeptide: Protein pelota homolog (357 aa).

The protein belongs to the eukaryotic release factor 1 family. Pelota subfamily. In terms of assembly, monomer. Requires a divalent metal cation as cofactor.

Its subcellular location is the cytoplasm. Functionally, may function in recognizing stalled ribosomes, interact with stem-loop structures in stalled mRNA molecules, and effect endonucleolytic cleavage of the mRNA. May play a role in the release non-functional ribosomes and degradation of damaged mRNAs. Has endoribonuclease activity. This Methanocella arvoryzae (strain DSM 22066 / NBRC 105507 / MRE50) protein is Protein pelota homolog.